The primary structure comprises 426 residues: 3',5'-cyclic-nucleotide phosphodiesterase (426 aa).

The segment at 210–229 (DKEDAQHHSNSNSNSNNIWG) is disordered.

Belongs to the cyclic nucleotide phosphodiesterase class-II family.

It catalyses the reaction a nucleoside 3',5'-cyclic phosphate + H2O = a nucleoside 5'-phosphate + H(+). This Candida albicans (Yeast) protein is 3',5'-cyclic-nucleotide phosphodiesterase (PDE1).